The chain runs to 263 residues: RNA exonuclease 4 (263 aa).

The tract at residues 1–27 is disordered; that stretch reads MRLSSNWSKLQDGVTKKAGKKRIDKKP. Over residues 17 to 27 the composition is skewed to basic residues; sequence KAGKKRIDKKP. Residues 95–247 enclose the Exonuclease domain; the sequence is YIAMDCEFVG…EDARATMLIY (153 aa).

It belongs to the REXO4 family.

It is found in the nucleus. In terms of biological role, exoribonuclease involved in ribosome biosynthesis. Involved in the processing of ITS1, the internal transcribed spacer localized between the 18S and 5.8S rRNAs. The polypeptide is RNA exonuclease 4 (REX4) (Candida glabrata (strain ATCC 2001 / BCRC 20586 / JCM 3761 / NBRC 0622 / NRRL Y-65 / CBS 138) (Yeast)).